Reading from the N-terminus, the 296-residue chain is NAD kinase (296 aa).

D72 functions as the Proton acceptor in the catalytic mechanism. NAD(+) contacts are provided by residues 72-73 (DG), 146-147 (ND), R157, K174, D176, 187-192 (TAYALS), and Q247.

This sequence belongs to the NAD kinase family. Requires a divalent metal cation as cofactor.

Its subcellular location is the cytoplasm. The catalysed reaction is NAD(+) + ATP = ADP + NADP(+) + H(+). Functionally, involved in the regulation of the intracellular balance of NAD and NADP, and is a key enzyme in the biosynthesis of NADP. Catalyzes specifically the phosphorylation on 2'-hydroxyl of the adenosine moiety of NAD to yield NADP. The chain is NAD kinase from Pseudomonas syringae pv. tomato (strain ATCC BAA-871 / DC3000).